The following is a 91-amino-acid chain: UPF0335 protein BBta_6866 (91 aa).

The protein belongs to the UPF0335 family.

In Bradyrhizobium sp. (strain BTAi1 / ATCC BAA-1182), this protein is UPF0335 protein BBta_6866.